Here is a 329-residue protein sequence, read N- to C-terminus: Phenylalanine--tRNA ligase alpha subunit (329 aa).

Glu-246 serves as a coordination point for Mg(2+).

Belongs to the class-II aminoacyl-tRNA synthetase family. Phe-tRNA synthetase alpha subunit type 1 subfamily. Tetramer of two alpha and two beta subunits. The cofactor is Mg(2+).

Its subcellular location is the cytoplasm. The catalysed reaction is tRNA(Phe) + L-phenylalanine + ATP = L-phenylalanyl-tRNA(Phe) + AMP + diphosphate + H(+). In Helicobacter hepaticus (strain ATCC 51449 / 3B1), this protein is Phenylalanine--tRNA ligase alpha subunit.